Here is a 418-residue protein sequence, read N- to C-terminus: Probable cysteine desulfurase 2 (418 aa).

N6-(pyridoxal phosphate)lysine is present on Lys-234. Cys-374 (cysteine persulfide intermediate) is an active-site residue.

This sequence belongs to the class-V pyridoxal-phosphate-dependent aminotransferase family. Csd subfamily. It depends on pyridoxal 5'-phosphate as a cofactor.

It catalyses the reaction (sulfur carrier)-H + L-cysteine = (sulfur carrier)-SH + L-alanine. Catalyzes the removal of elemental sulfur and selenium atoms from L-cysteine, L-cystine, L-selenocysteine, and L-selenocystine to produce L-alanine. This is Probable cysteine desulfurase 2 (csd2) from Mycobacterium leprae (strain TN).